Here is a 455-residue protein sequence, read N- to C-terminus: Phosphomethylpyrimidine synthase (455 aa).

Residues N80, M109, Y139, H175, 195-197 (SRG), 236-239 (DSLR), and E275 each bind substrate. H279 contacts Zn(2+). A substrate-binding site is contributed by Y302. H343 contributes to the Zn(2+) binding site. [4Fe-4S] cluster is bound by residues C423, C426, and C431.

The protein belongs to the ThiC family. [4Fe-4S] cluster serves as cofactor.

The catalysed reaction is 5-amino-1-(5-phospho-beta-D-ribosyl)imidazole + S-adenosyl-L-methionine = 4-amino-2-methyl-5-(phosphooxymethyl)pyrimidine + CO + 5'-deoxyadenosine + formate + L-methionine + 3 H(+). The protein operates within cofactor biosynthesis; thiamine diphosphate biosynthesis. Its function is as follows. Catalyzes the synthesis of the hydroxymethylpyrimidine phosphate (HMP-P) moiety of thiamine from aminoimidazole ribotide (AIR) in a radical S-adenosyl-L-methionine (SAM)-dependent reaction. The chain is Phosphomethylpyrimidine synthase from Synechococcus sp. (strain JA-2-3B'a(2-13)) (Cyanobacteria bacterium Yellowstone B-Prime).